The primary structure comprises 575 residues: Urease subunit alpha (575 aa).

One can recognise a Urease domain in the interval Gly138–Phe575. Ni(2+)-binding residues include His143, His145, and Lys226. N6-carboxylysine is present on Lys226. A substrate-binding site is contributed by His228. Ni(2+) is bound by residues His255 and His281. His329 serves as the catalytic Proton donor. Residue Asp369 participates in Ni(2+) binding.

Belongs to the metallo-dependent hydrolases superfamily. Urease alpha subunit family. As to quaternary structure, heterotrimer of UreA (gamma), UreB (beta) and UreC (alpha) subunits. Three heterotrimers associate to form the active enzyme. Ni cation serves as cofactor. In terms of processing, carboxylation allows a single lysine to coordinate two nickel ions.

It is found in the cytoplasm. It carries out the reaction urea + 2 H2O + H(+) = hydrogencarbonate + 2 NH4(+). The protein operates within nitrogen metabolism; urea degradation; CO(2) and NH(3) from urea (urease route): step 1/1. This Frankia alni (strain DSM 45986 / CECT 9034 / ACN14a) protein is Urease subunit alpha.